Consider the following 309-residue polypeptide: Phosphoserine phosphatase (309 aa).

Asp-97 serves as the catalytic Nucleophile. Mg(2+) is bound by residues Asp-97 and Asp-99. The active-site Proton donor is the Asp-99. Residues Glu-106, Arg-142, 186 to 187 (SG), and Lys-232 each bind substrate. Asp-255 serves as a coordination point for Mg(2+). Position 258 (Asn-258) interacts with substrate.

Belongs to the HAD-like hydrolase superfamily. SerB family. It depends on Mg(2+) as a cofactor.

It catalyses the reaction O-phospho-L-serine + H2O = L-serine + phosphate. The catalysed reaction is O-phospho-D-serine + H2O = D-serine + phosphate. It functions in the pathway amino-acid biosynthesis; L-serine biosynthesis; L-serine from 3-phospho-D-glycerate: step 3/3. This Saccharomyces cerevisiae (strain ATCC 204508 / S288c) (Baker's yeast) protein is Phosphoserine phosphatase (SER2).